The sequence spans 703 residues: Stonustoxin subunit alpha (703 aa).

The interval 2–265 (SSDLVMPALG…KAQQLIQEIN (264 aa)) is structural MACPF/CDC pore-forming domain. Positions 266–385 (VSKVRRIHTT…GMVEGTQAKF (120 aa)) are structural FAT domain. The thioredoxin (THX) domain stretch occupies residues 386 to 517 (VSNQTELDRE…PRMPFVQGYK (132 aa)). Residues 508–703 (PRMPFVQGYK…AGNHGTLRLL (196 aa)) form the B30.2/SPRY domain.

Belongs to the SNTX/VTX toxin family. Heterodimer of alpha and beta subunits; non-covalently linked. Intrachain disulfide bonds may be present in the heterodimer. Post-translationally, not glycosylated. In terms of tissue distribution, expressed by the venom gland.

It localises to the secreted. In terms of biological role, this lethal (towards mammals) heterodimer induces hemolytic activities due to its ability to form pores in the cell membrane. The pore may be composed of 10 SNTX-alpha/beta heterodimers. The toxin elicits potent hypotension which is endothelium-dependent and appears to be mediated by the nitric oxide pathway and activation of potassium channels. In addition, it displays edema-inducing activities, increases vascular permeability. It also shows myotoxic activities and interferes irreversibly with neuromuscular function. It also induces irreversible platelet aggregation in rabbit or rat (but not in human or mouse) whole blood. In addition, it has been observed to increase spontaneous quantal acetylcholine release from isolated frog cutaneous pectoris motor endings. The polypeptide is Stonustoxin subunit alpha (Synanceia horrida (Estuarine stonefish)).